Consider the following 226-residue polypeptide: Urease accessory protein UreF (226 aa).

This sequence belongs to the UreF family. As to quaternary structure, ureD, UreF and UreG form a complex that acts as a GTP-hydrolysis-dependent molecular chaperone, activating the urease apoprotein by helping to assemble the nickel containing metallocenter of UreC. The UreE protein probably delivers the nickel.

It is found in the cytoplasm. Required for maturation of urease via the functional incorporation of the urease nickel metallocenter. This is Urease accessory protein UreF from Corynebacterium glutamicum (strain R).